The primary structure comprises 267 residues: Cell division control protein 11 (267 aa).

A Septin-type G domain is found at 6 to 263 (QNRRFTIMAA…ENYRAAVLEG (258 aa)). Positions 16 to 23 (GPRGSGKS) are G1 motif. Residues 16 to 23 (GPRGSGKS), glycine 66, 146 to 154 (KSDGLSITE), and arginine 212 contribute to the GTP site. The segment at 63–66 (DTPG) is G3 motif. The interval 145–148 (SKSD) is G4 motif.

Belongs to the TRAFAC class TrmE-Era-EngA-EngB-Septin-like GTPase superfamily. Septin GTPase family. As to quaternary structure, component of the septin complex.

Septins are GTPases involved in cytokinesis. The septins localize to the site of cleavage and act as a structural scaffold that recruits different components involved in diverse processes at specific stages during the cell cycle. Septins are also involved in cell morphogenesis, chitin deposition, cell cycle regulation, cell compartmentalization and spore wall formation. This Encephalitozoon cuniculi (strain GB-M1) (Microsporidian parasite) protein is Cell division control protein 11 (CDC11).